The chain runs to 273 residues: Dermonecrotic toxin LapSicTox-alphaIB1aiii (273 aa).

The active site involves histidine 5. Mg(2+) is bound by residues glutamate 25 and aspartate 27. The active-site Nucleophile is the histidine 41. 2 cysteine pairs are disulfide-bonded: cysteine 45–cysteine 51 and cysteine 47–cysteine 190. Mg(2+) is bound at residue aspartate 85. N-linked (GlcNAc...) asparagine glycosylation occurs at asparagine 250.

Belongs to the arthropod phospholipase D family. Class II subfamily. Mg(2+) is required as a cofactor. Expressed by the venom gland.

The protein localises to the secreted. The catalysed reaction is an N-(acyl)-sphingosylphosphocholine = an N-(acyl)-sphingosyl-1,3-cyclic phosphate + choline. The enzyme catalyses an N-(acyl)-sphingosylphosphoethanolamine = an N-(acyl)-sphingosyl-1,3-cyclic phosphate + ethanolamine. It catalyses the reaction a 1-acyl-sn-glycero-3-phosphocholine = a 1-acyl-sn-glycero-2,3-cyclic phosphate + choline. It carries out the reaction a 1-acyl-sn-glycero-3-phosphoethanolamine = a 1-acyl-sn-glycero-2,3-cyclic phosphate + ethanolamine. Its function is as follows. Dermonecrotic toxins cleave the phosphodiester linkage between the phosphate and headgroup of certain phospholipids (sphingolipid and lysolipid substrates), forming an alcohol (often choline) and a cyclic phosphate. This toxin acts on sphingomyelin (SM). It may also act on ceramide phosphoethanolamine (CPE), lysophosphatidylcholine (LPC) and lysophosphatidylethanolamine (LPE), but not on lysophosphatidylserine (LPS), and lysophosphatidylglycerol (LPG). It acts by transphosphatidylation, releasing exclusively cyclic phosphate products as second products. Induces dermonecrosis, hemolysis, increased vascular permeability, edema, inflammatory response, and platelet aggregation. This chain is Dermonecrotic toxin LapSicTox-alphaIB1aiii, found in Loxosceles apachea (Apache recluse spider).